A 50-amino-acid polypeptide reads, in one-letter code: Large ribosomal subunit protein eL39 (50 aa).

The span at 1-12 shows a compositional bias: basic residues; sequence MGKKSKAKKKRL. Positions 1–21 are disordered; sequence MGKKSKAKKKRLGKLEKQNSR.

It belongs to the eukaryotic ribosomal protein eL39 family.

This chain is Large ribosomal subunit protein eL39, found in Haloquadratum walsbyi (strain DSM 16790 / HBSQ001).